Consider the following 75-residue polypeptide: Kappa-scoloptoxin(03)-Ssm1d (75 aa).

The signal sequence occupies residues 1 to 23; sequence MKLSMAILLVMALIIFTLDKNYS.

It belongs to the scoloptoxin-03 family. Contains 3 disulfide bonds. In terms of tissue distribution, expressed by the venom gland.

The protein localises to the secreted. In terms of biological role, inhibits voltage-gated potassium channels. The protein is Kappa-scoloptoxin(03)-Ssm1d of Scolopendra mutilans (Chinese red-headed centipede).